Reading from the N-terminus, the 164-residue chain is Thiol peroxidase (164 aa).

Positions 18–163 (INEGDFAPDF…FDAALAAYKN (146 aa)) constitute a Thioredoxin domain. Cysteine 60 serves as the catalytic Cysteine sulfenic acid (-SOH) intermediate. An intrachain disulfide couples cysteine 60 to cysteine 93.

This sequence belongs to the peroxiredoxin family. Tpx subfamily. As to quaternary structure, homodimer.

The catalysed reaction is a hydroperoxide + [thioredoxin]-dithiol = an alcohol + [thioredoxin]-disulfide + H2O. Its function is as follows. Thiol-specific peroxidase that catalyzes the reduction of hydrogen peroxide and organic hydroperoxides to water and alcohols, respectively. Plays a role in cell protection against oxidative stress by detoxifying peroxides. The protein is Thiol peroxidase of Staphylococcus aureus (strain COL).